The primary structure comprises 334 residues: Ornithine carbamoyltransferase (334 aa).

Residues 57–60 (STRT), Gln-84, Arg-108, and 135–138 (HPTQ) contribute to the carbamoyl phosphate site. Residues Asn-169, Asp-233, and 237 to 238 (SM) each bind L-ornithine. Carbamoyl phosphate is bound by residues 275 to 276 (CL) and Arg-320.

The protein belongs to the aspartate/ornithine carbamoyltransferase superfamily. OTCase family.

It localises to the cytoplasm. It carries out the reaction carbamoyl phosphate + L-ornithine = L-citrulline + phosphate + H(+). It functions in the pathway amino-acid biosynthesis; L-arginine biosynthesis; L-arginine from L-ornithine and carbamoyl phosphate: step 1/3. Functionally, reversibly catalyzes the transfer of the carbamoyl group from carbamoyl phosphate (CP) to the N(epsilon) atom of ornithine (ORN) to produce L-citrulline. The chain is Ornithine carbamoyltransferase from Vibrio parahaemolyticus serotype O3:K6 (strain RIMD 2210633).